Here is a 756-residue protein sequence, read N- to C-terminus: Xylosyl- and glucuronyltransferase LARGE1 (756 aa).

Topologically, residues 1–10 (MLGICRGRRK) are cytoplasmic. Residues 11–31 (FLAASLSLLCIPAITWIYLFS) form a helical; Signal-anchor for type II membrane protein membrane-spanning segment. Residues 32–756 (GSFEDGKPVS…LKYLTAENNS (725 aa)) lie on the Lumenal side of the membrane. Disordered stretches follow at residues 43 to 69 (SPLE…EVRM) and 81 to 109 (RQLS…EGTG). Polar residues predominate over residues 44–58 (PLESQAHSPRYTASS). Residues 53–95 (RYTASSQRERESLEVRMREVEEENRALRRQLSLAQGRAPSHRR) are a coiled coil. Positions 59–69 (QRERESLEVRM) are enriched in basic and acidic residues. N97, N122, and N148 each carry an N-linked (GlcNAc...) asparagine glycan. The segment at 138-413 (IHVAIVCAGY…FLEYDGNLLR (276 aa)) is xylosyltransferase activity. D242 and D244 together coordinate Mn(2+). A glycan (N-linked (GlcNAc...) asparagine) is linked at N272. Residues 414 to 756 (RELFGCPSEA…LKYLTAENNS (343 aa)) form a glucuronyltransferase activity region. Residues D563 and D565 each coordinate Mn(2+).

This sequence in the C-terminal section; belongs to the glycosyltransferase 49 family. It in the N-terminal section; belongs to the glycosyltransferase 8 family. In terms of assembly, interacts with DAG1 (via the N-terminal domain of alpha-DAG1); the interaction increases binding of DAG1 to laminin. Interacts with B4GAT1. Mn(2+) serves as cofactor. Ubiquitous. Highest expression in heart, brain and skeletal muscle.

The protein localises to the golgi apparatus membrane. The enzyme catalyses 3-O-[beta-D-GlcA-(1-&gt;3)-beta-D-Xyl-(1-&gt;4)-Rib-ol-P-Rib-ol-P-3-beta-D-GalNAc-(1-&gt;3)-beta-D-GlcNAc-(1-&gt;4)-(O-6-P-alpha-D-Man)]-Thr-[protein] + UDP-alpha-D-xylose = 3-O-[alpha-D-Xyl-(1-&gt;3)-beta-D-GlcA-(1-&gt;4)-beta-D-Xyl-(1-&gt;4)-Rib-ol-P-Rib-ol-P-3-beta-D-GalNAc-(1-&gt;3)-beta-D-GlcNAc-(1-&gt;4)-(O-6-P-alpha-D-Man)]-Thr-[protein] + UDP + H(+). It catalyses the reaction 3-O-{(1-&gt;[3)-alpha-D-Xyl-(1-&gt;3)-beta-D-GlcA-(1-&gt;](n)-4)-beta-D-Xyl-(1-&gt;4)-Rib-ol-P-Rib-ol-P-3-beta-D-GalNAc-(1-&gt;3)-beta-D-GlcNAc-(1-&gt;4)-O-6-P-alpha-D-Man}-L-Thr-[protein] + UDP-alpha-D-glucuronate = 3-O-{beta-D-GlcA-(1-&gt;[3)-alpha-D-Xyl-(1-&gt;3)-beta-D-GlcA-(1-&gt;](n)-4)-beta-D-Xyl-(1-&gt;4)-Rib-ol-P-Rib-ol-P-3-beta-D-GalNAc-(1-&gt;3)-beta-D-GlcNAc-(1-&gt;4)-O-6-P-alpha-D-Man}-L-Thr-[protein] + UDP + H(+). It carries out the reaction 3-O-{beta-D-GlcA-(1-&gt;[3)-alpha-D-Xyl-(1-&gt;3)-beta-D-GlcA-(1-&gt;](n)-4)-beta-D-Xyl-(1-&gt;4)-Rib-ol-P-Rib-ol-P-3-beta-D-GalNAc-(1-&gt;3)-beta-D-GlcNAc-(1-&gt;4)-O-6-P-alpha-D-Man}-L-Thr-[protein] + UDP-alpha-D-xylose = 3-O-{(1-&gt;[3)-alpha-D-Xyl-(1-&gt;3)-beta-D-GlcA-(1-&gt;](n+1)-4)-beta-D-Xyl-(1-&gt;4)-Rib-ol-P-Rib-ol-P-3-beta-D-GalNAc-(1-&gt;3)-beta-D-GlcNAc-(1-&gt;4)-O-6-P-alpha-D-Man}-L-Thr-[protein] + UDP + H(+). It functions in the pathway protein modification; protein glycosylation. Functionally, bifunctional glycosyltransferase with both alpha-1,3-xylosyltransferase and beta-1,3-glucuronyltransferase activities involved in the maturation of alpha-dystroglycan (DAG1) by glycosylation leading to DAG1 binding to laminin G-like domain-containing extracellular proteins with high affinity. Elongates the glucuronyl-beta-1,4-xylose-beta disaccharide primer structure initiated by B4GAT1 by adding repeating units [-3-Xylose-alpha-1,3-GlcA-beta-1-] to produce a heteropolysaccharide. Requires the phosphorylation of core M3 (O-mannosyl trisaccharide) by POMK to elongate the glucuronyl-beta-1,4-xylose-beta disaccharide primer. Plays a key role in skeletal muscle function and regeneration. This chain is Xylosyl- and glucuronyltransferase LARGE1, found in Homo sapiens (Human).